Consider the following 408-residue polypeptide: Peptidase T (408 aa).

His-78 provides a ligand contact to Zn(2+). Asp-80 is a catalytic residue. Asp-141 provides a ligand contact to Zn(2+). The active-site Proton acceptor is the Glu-175. Zn(2+) contacts are provided by Glu-176, Asp-198, and His-380.

The protein belongs to the peptidase M20B family. Zn(2+) is required as a cofactor.

It localises to the cytoplasm. The catalysed reaction is Release of the N-terminal residue from a tripeptide.. Cleaves the N-terminal amino acid of tripeptides. This Clostridium acetobutylicum (strain ATCC 824 / DSM 792 / JCM 1419 / IAM 19013 / LMG 5710 / NBRC 13948 / NRRL B-527 / VKM B-1787 / 2291 / W) protein is Peptidase T.